A 120-amino-acid polypeptide reads, in one-letter code: Cell cycle protein GpsB (120 aa).

Residues 34-74 (LDDVIKDYDTYNKELERLNDENERLRAKVDELNRQVEVGSS) adopt a coiled-coil conformation. The tract at residues 69 to 90 (VEVGSSMSNQTASRQPVSSATN) is disordered. Over residues 71–90 (VGSSMSNQTASRQPVSSATN) the composition is skewed to polar residues.

This sequence belongs to the GpsB family. As to quaternary structure, forms polymers through the coiled coil domains. Interacts with PBP1, MreC and EzrA.

The protein localises to the cytoplasm. Divisome component that associates with the complex late in its assembly, after the Z-ring is formed, and is dependent on DivIC and PBP2B for its recruitment to the divisome. Together with EzrA, is a key component of the system that regulates PBP1 localization during cell cycle progression. Its main role could be the removal of PBP1 from the cell pole after pole maturation is completed. Also contributes to the recruitment of PBP1 to the division complex. Not essential for septum formation. The chain is Cell cycle protein GpsB from Limosilactobacillus reuteri (strain DSM 20016) (Lactobacillus reuteri).